The sequence spans 1313 residues: Restriction of telomere capping protein 1 (1313 aa).

Polar residues predominate over residues 1–17 (MSNYSCPRTHNKSNMSG). 2 disordered regions span residues 1–22 (MSNYSCPRTHNKSNMSGRNEVK) and 38–83 (NSIH…QQLM). Over residues 57–69 (YSFGSINSSNSSY) the composition is skewed to low complexity. The span at 70–83 (DRSRDPSSVEQQLM) shows a compositional bias: basic and acidic residues. WD repeat units lie at residues 180-221 (IKLS…NIDN), 229-269 (EHSR…LSGS), 339-378 (AHTGPGLCLNWHPNQDYIATGGRDGKCCIWYIGDVVNDAP), 442-484 (GEEA…NTDR), 711-752 (SQVD…ALST), 795-837 (QHKV…LLWD), 1100-1143 (SPKE…KQLF), and 1190-1229 (LFEIATALLKYCSWNNILEGNGGNSTVQLFCDKCGKLIVN). The RING-type; degenerate zinc finger occupies 1267–1309 (CVLCEKPMKKLVMCVLACGHEGHFQCLRDWFLNEGMNECPAGD).

Belongs to the WD repeat RTC1 family.

The protein resides in the vacuole. Its function is as follows. May be involved in a process influencing telomere capping. In Vanderwaltozyma polyspora (strain ATCC 22028 / DSM 70294 / BCRC 21397 / CBS 2163 / NBRC 10782 / NRRL Y-8283 / UCD 57-17) (Kluyveromyces polysporus), this protein is Restriction of telomere capping protein 1 (RTC1).